The primary structure comprises 205 residues: Large ribosomal subunit protein uL10 (205 aa).

The segment at 167–205 (AQGAAPAEAKAEAPASEEKAADTPAEQPAESAPEAAPEA) is disordered. Low complexity-rich tracts occupy residues 169-180 (GAAPAEAKAEAP) and 190-205 (PAEQPAESAPEAAPEA).

Belongs to the universal ribosomal protein uL10 family. Part of the ribosomal stalk of the 50S ribosomal subunit. The N-terminus interacts with L11 and the large rRNA to form the base of the stalk. The C-terminus forms an elongated spine to which L12 dimers bind in a sequential fashion forming a multimeric L10(L12)X complex.

Its function is as follows. Forms part of the ribosomal stalk, playing a central role in the interaction of the ribosome with GTP-bound translation factors. The chain is Large ribosomal subunit protein uL10 from Treponema denticola (strain ATCC 35405 / DSM 14222 / CIP 103919 / JCM 8153 / KCTC 15104).